The sequence spans 137 residues: Large ribosomal subunit protein uL16 (137 aa).

Positions 1–17 are enriched in basic residues; that stretch reads MLQPKRTKFRKQQKGRN. The interval 1–21 is disordered; the sequence is MLQPKRTKFRKQQKGRNRGQA.

It belongs to the universal ribosomal protein uL16 family. Part of the 50S ribosomal subunit.

In terms of biological role, binds 23S rRNA and is also seen to make contacts with the A and possibly P site tRNAs. This Nitrosococcus oceani (strain ATCC 19707 / BCRC 17464 / JCM 30415 / NCIMB 11848 / C-107) protein is Large ribosomal subunit protein uL16.